A 471-amino-acid chain; its full sequence is Ribulose bisphosphate carboxylase large chain 2 (471 aa).

Residues N116 and T166 each contribute to the substrate site. Catalysis depends on K168, which acts as the Proton acceptor. Residue K170 coordinates substrate. Residues K194, D196, and E197 each coordinate Mg(2+). Position 194 is an N6-carboxylysine (K194). The active-site Proton acceptor is the H287. R288, H320, and S372 together coordinate substrate.

The protein belongs to the RuBisCO large chain family. Type I subfamily. As to quaternary structure, heterohexadecamer of 8 large chains and 8 small chains. Requires Mg(2+) as cofactor.

Its subcellular location is the carboxysome. The enzyme catalyses 2 (2R)-3-phosphoglycerate + 2 H(+) = D-ribulose 1,5-bisphosphate + CO2 + H2O. The catalysed reaction is D-ribulose 1,5-bisphosphate + O2 = 2-phosphoglycolate + (2R)-3-phosphoglycerate + 2 H(+). Its function is as follows. RuBisCO catalyzes two reactions: the carboxylation of D-ribulose 1,5-bisphosphate, the primary event in carbon dioxide fixation, as well as the oxidative fragmentation of the pentose substrate. Both reactions occur simultaneously and in competition at the same active site. The chain is Ribulose bisphosphate carboxylase large chain 2 from Hydrogenovibrio marinus.